A 137-amino-acid polypeptide reads, in one-letter code: Small ribosomal subunit protein bS6 (137 aa).

Residues 96 to 137 (ITEASPMAKAKDERDTRRSSEERAPRAEATEEAEESAENTAE) are disordered. Residues 104–124 (KAKDERDTRRSSEERAPRAEA) are compositionally biased toward basic and acidic residues. Positions 125–137 (TEEAEESAENTAE) are enriched in acidic residues.

This sequence belongs to the bacterial ribosomal protein bS6 family.

Its function is as follows. Binds together with bS18 to 16S ribosomal RNA. The polypeptide is Small ribosomal subunit protein bS6 (Shewanella pealeana (strain ATCC 700345 / ANG-SQ1)).